The following is a 174-amino-acid chain: Co-chaperone protein HscB homolog (174 aa).

The J domain maps to asparagine 2–leucine 74.

Belongs to the HscB family. In terms of assembly, interacts with HscA and stimulates its ATPase activity.

Co-chaperone involved in the maturation of iron-sulfur cluster-containing proteins. Seems to help targeting proteins to be folded toward HscA. The protein is Co-chaperone protein HscB homolog of Shewanella amazonensis (strain ATCC BAA-1098 / SB2B).